Consider the following 465-residue polypeptide: Sensor histidine kinase ZraS (465 aa).

The Cytoplasmic segment spans residues M1 to W14. The helical transmembrane segment at L15–I35 threads the bilayer. At R36–T203 the chain is on the periplasmic side. A helical membrane pass occupies residues L204–Y224. The Cytoplasmic portion of the chain corresponds to Q225 to D465. In terms of domain architecture, Histidine kinase spans G253–A461. Residue H256 is modified to Phosphohistidine; by autocatalysis.

Post-translationally, autophosphorylated.

It localises to the cell inner membrane. It carries out the reaction ATP + protein L-histidine = ADP + protein N-phospho-L-histidine.. Its activity is regulated as follows. Activity of the ZraS/ZraR two-component system is repressed by the zinc-bound form of ZraP, which probably interacts with the periplasmic region of ZraS. Its function is as follows. Part of the Zra signaling pathway, an envelope stress response (ESR) system composed of the periplasmic accessory protein ZraP, the histidine kinase ZraS and the transcriptional regulator ZraR. The ZraPSR system contributes to antibiotic resistance and is important for membrane integrity in the presence of membrane-targeting biocides. ZraS is a member of the two-component regulatory system ZraS/ZraR. Functions as a membrane-associated sensor kinase that phosphorylates ZraR in response to high concentrations of Zn(2+) or Pb(2+) in the medium. The polypeptide is Sensor histidine kinase ZraS (zraS) (Salmonella typhi).